The following is a 376-amino-acid chain: O-demethylpuromycin-O-methyltransferase (376 aa).

Residues 1–28 (MAPTEATRGGPADPAPAPEAHRGGHTEH) form a disordered region. A compositionally biased stretch (basic and acidic residues) spans 19 to 28 (EAHRGGHTEH). Residues aspartate 235 and 261 to 263 (GDF) contribute to the S-adenosyl-L-methionine site. The active-site Proton acceptor is the histidine 281.

This sequence belongs to the class I-like SAM-binding methyltransferase superfamily. Cation-independent O-methyltransferase family.

It carries out the reaction O-demethylpuromycin + S-adenosyl-L-methionine = puromycin + S-adenosyl-L-homocysteine + H(+). In Streptomyces alboniger, this protein is O-demethylpuromycin-O-methyltransferase (dmpM).